The sequence spans 126 residues: uncharacterized protein (126 aa).

At methionine 1–valine 28 the chain is on the cytoplasmic side. The helical transmembrane segment at valine 29 to isoleucine 49 threads the bilayer. Residues aspartate 50–serine 75 are Extracellular-facing. A helical membrane pass occupies residues valine 76–isoleucine 96. Position 97 (glycine 97) is a topological domain, cytoplasmic. A helical transmembrane segment spans residues histidine 98–alanine 118. The Extracellular segment spans residues glutamate 119–threonine 126.

It is found in the membrane. This is an uncharacterized protein from Saccharomyces cerevisiae (strain ATCC 204508 / S288c) (Baker's yeast).